Here is a 567-residue protein sequence, read N- to C-terminus: Oxygen-dependent choline dehydrogenase (567 aa).

D6–E35 serves as a coordination point for FAD. H475 acts as the Proton acceptor in catalysis.

The protein belongs to the GMC oxidoreductase family. FAD serves as cofactor.

It catalyses the reaction choline + A = betaine aldehyde + AH2. The enzyme catalyses betaine aldehyde + NAD(+) + H2O = glycine betaine + NADH + 2 H(+). It participates in amine and polyamine biosynthesis; betaine biosynthesis via choline pathway; betaine aldehyde from choline (cytochrome c reductase route): step 1/1. In terms of biological role, involved in the biosynthesis of the osmoprotectant glycine betaine. Catalyzes the oxidation of choline to betaine aldehyde and betaine aldehyde to glycine betaine at the same rate. This is Oxygen-dependent choline dehydrogenase from Pseudomonas fluorescens (strain SBW25).